Consider the following 458-residue polypeptide: Cysteine--tRNA ligase (458 aa).

Cys-28 lines the Zn(2+) pocket. A 'HIGH' region motif is present at residues 30-40; the sequence is VTVYDLCHFGH. Residues Cys-209, His-234, and Glu-238 each contribute to the Zn(2+) site. Residues 266-270 carry the 'KMSKS' region motif; that stretch reads KMSKS. Position 269 (Lys-269) interacts with ATP.

Belongs to the class-I aminoacyl-tRNA synthetase family. In terms of assembly, monomer. The cofactor is Zn(2+).

Its subcellular location is the cytoplasm. It carries out the reaction tRNA(Cys) + L-cysteine + ATP = L-cysteinyl-tRNA(Cys) + AMP + diphosphate. The sequence is that of Cysteine--tRNA ligase from Mannheimia succiniciproducens (strain KCTC 0769BP / MBEL55E).